The primary structure comprises 133 residues: MAEKIQFELVSPAKLLVSSKVDMVVVPGAEGDFGALALHAPMITTVRPGVIDIHDGGKVSSSVFVAGGFAEVNEERITVLAEEAIPVGELTAEMAEARKKAAKEALDDAKSDRDKAHAGRLMLVAEAMAAAVA.

The protein belongs to the ATPase epsilon chain family. F-type ATPases have 2 components, CF(1) - the catalytic core - and CF(0) - the membrane proton channel. CF(1) has five subunits: alpha(3), beta(3), gamma(1), delta(1), epsilon(1). CF(0) has three main subunits: a, b and c.

It is found in the cell inner membrane. Functionally, produces ATP from ADP in the presence of a proton gradient across the membrane. This Paramagnetospirillum magneticum (strain ATCC 700264 / AMB-1) (Magnetospirillum magneticum) protein is ATP synthase epsilon chain.